Consider the following 260-residue polypeptide: Dehydrin ERD10 (260 aa).

Disordered stretches follow at residues 1–187 (MAEE…EEEK), 197–216 (KLPG…TTPL), and 240–260 (KLPG…KVSD). Residue Ala-2 is modified to N-acetylalanine. Residues 26 to 44 (EIKERGMFDFLKKKEEVKP) are compositionally biased toward basic and acidic residues. Position 61 is a phosphoserine (Ser-61). Composition is skewed to basic and acidic residues over residues 67 to 102 (VAKH…DKLH), 130 to 140 (IVEGDHVKTVE), 148 to 162 (DRIK…KPGG), 176 to 187 (SVEDHKPEEEEK), and 197 to 207 (KLPGHSKKPED). 2 consecutive repeat copies span residues 184–204 (EEEK…HSKK) and 227–247 (PEEK…YHAK). The 2 X 21 AA repeats, Lys-rich stretch occupies residues 184 to 247 (EEEKKGFMDK…KEKLPGYHAK (64 aa)).

The protein belongs to the plant dehydrin family. As to expression, in stems, cauline leaves, roots and flowers. Low levels found in maturing seeds. Absent in dry seeds.

This chain is Dehydrin ERD10 (ERD10), found in Arabidopsis thaliana (Mouse-ear cress).